The primary structure comprises 488 residues: Proline--tRNA ligase (488 aa).

Belongs to the class-II aminoacyl-tRNA synthetase family. ProS type 3 subfamily. In terms of assembly, homodimer.

The protein localises to the cytoplasm. It catalyses the reaction tRNA(Pro) + L-proline + ATP = L-prolyl-tRNA(Pro) + AMP + diphosphate. Its function is as follows. Catalyzes the attachment of proline to tRNA(Pro) in a two-step reaction: proline is first activated by ATP to form Pro-AMP and then transferred to the acceptor end of tRNA(Pro). This Borrelia garinii subsp. bavariensis (strain ATCC BAA-2496 / DSM 23469 / PBi) (Borreliella bavariensis) protein is Proline--tRNA ligase.